A 483-amino-acid polypeptide reads, in one-letter code: Regulatory protein ViaA (483 aa).

Belongs to the ViaA family. As to quaternary structure, homodimer. Interacts with RavA.

The protein localises to the cytoplasm. Functionally, component of the RavA-ViaA chaperone complex, which may act on the membrane to optimize the function of some of the respiratory chains. ViaA stimulates the ATPase activity of RavA. This Cronobacter sakazakii (strain ATCC BAA-894) (Enterobacter sakazakii) protein is Regulatory protein ViaA.